Consider the following 488-residue polypeptide: Calcium uniporter protein, mitochondrial (488 aa).

The transit peptide at 1 to 74 (MRALVSRTPI…RSFQLSASSR (74 aa)) directs the protein to the mitochondrion. The segment at 65–117 (RSFQLSASSRDKRGPQSAEPDPLERLEVKKVQQQHENEKDDSGRDTKSGGKVA) is disordered. The Mitochondrial matrix segment spans residues 75-339 (DKRGPQSAEP…ECDALAHRGA (265 aa)). Over residues 86 to 112 (PLERLEVKKVQQQHENEKDDSGRDTKS) the composition is skewed to basic and acidic residues. The chain crosses the membrane as a helical span at residues 340 to 361 (QRVALGGFGILAFWWYIVYKLT). Residues 362 to 370 (FETDLGWDT) lie on the Mitochondrial intermembrane side of the membrane. Residues 368 to 376 (WDTMEPVTY) carry the Selectivity filter motif. A helical transmembrane segment spans residues 371-391 (MEPVTYLVSLSTLMGGYLWFL). Glu372 is a binding site for Ca(2+). Residues 392–488 (YHNREISYRS…ERPKDDRDDD (97 aa)) are Mitochondrial matrix-facing. Residues 464–488 (ALKKERRLKNGSQKEERPKDDRDDD) form a disordered region. Residues 475 to 488 (SQKEERPKDDRDDD) show a composition bias toward basic and acidic residues.

Belongs to the MCU (TC 1.A.77) family. In terms of assembly, homotetramer, assembles in a dimer or dimers configuration with two interfaces.

The protein localises to the mitochondrion inner membrane. The enzyme catalyses Ca(2+)(in) = Ca(2+)(out). Inhibited by ruthenium red or its derivative Ru360. Functionally, highly selective calcium channel localized to the inner mitochondrial membrane, which mediates calcium uptake into the mitochondrial matrix. Mitochondrial calcium homeostasis plays key roles in cellular physiology and regulates ATP production, cytoplasmic calcium signals and activation of cell death pathways. Sufficient to operate as a pore-forming channel without the need of calcium-sensor or auxiliary subunit. This is Calcium uniporter protein, mitochondrial from Neosartorya fischeri (strain ATCC 1020 / DSM 3700 / CBS 544.65 / FGSC A1164 / JCM 1740 / NRRL 181 / WB 181) (Aspergillus fischerianus).